The following is a 287-amino-acid chain: Bifunctional protein FolD (287 aa).

Residues 160–162 (GRS), serine 189, and threonine 230 each bind NADP(+).

It belongs to the tetrahydrofolate dehydrogenase/cyclohydrolase family. In terms of assembly, homodimer.

It carries out the reaction (6R)-5,10-methylene-5,6,7,8-tetrahydrofolate + NADP(+) = (6R)-5,10-methenyltetrahydrofolate + NADPH. The enzyme catalyses (6R)-5,10-methenyltetrahydrofolate + H2O = (6R)-10-formyltetrahydrofolate + H(+). Its pathway is one-carbon metabolism; tetrahydrofolate interconversion. Its function is as follows. Catalyzes the oxidation of 5,10-methylenetetrahydrofolate to 5,10-methenyltetrahydrofolate and then the hydrolysis of 5,10-methenyltetrahydrofolate to 10-formyltetrahydrofolate. The sequence is that of Bifunctional protein FolD from Chlamydia caviae (strain ATCC VR-813 / DSM 19441 / 03DC25 / GPIC) (Chlamydophila caviae).